Here is a 620-residue protein sequence, read N- to C-terminus: DNA primase (620 aa).

The CHC2-type zinc-finger motif lies at 38 to 62; it reads CPFHADQNPSMTVSVAKNIFKCFSC. Residues 266–350 form the Toprim domain; that stretch reads LKLYLVEGYF…IVEVVDWNQA (85 aa). Residues Glu-272, Asp-319, and Asp-321 each contribute to the Mg(2+) site.

It belongs to the DnaG primase family. In terms of assembly, monomer. Interacts with DnaB. Zn(2+) serves as cofactor. Mg(2+) is required as a cofactor.

It catalyses the reaction ssDNA + n NTP = ssDNA/pppN(pN)n-1 hybrid + (n-1) diphosphate.. In terms of biological role, RNA polymerase that catalyzes the synthesis of short RNA molecules used as primers for DNA polymerase during DNA replication. The polypeptide is DNA primase (Mycoplasma pneumoniae (strain ATCC 29342 / M129 / Subtype 1) (Mycoplasmoides pneumoniae)).